A 176-amino-acid polypeptide reads, in one-letter code: Ribosome rescue factor SmrB (176 aa).

In terms of domain architecture, Smr spans leucine 98–glutamate 173.

This sequence belongs to the SmrB family. In terms of assembly, associates with collided ribosomes, but not with correctly translating polysomes.

In terms of biological role, acts as a ribosome collision sensor. Detects stalled/collided disomes (pairs of ribosomes where the leading ribosome is stalled and a second ribosome has collided with it) and endonucleolytically cleaves mRNA at the 5' boundary of the stalled ribosome. Stalled/collided disomes form a new interface (primarily via the 30S subunits) that binds SmrB. Cleaved mRNA becomes available for tmRNA ligation, leading to ribosomal subunit dissociation and rescue of stalled ribosomes. The chain is Ribosome rescue factor SmrB from Yersinia enterocolitica serotype O:8 / biotype 1B (strain NCTC 13174 / 8081).